The following is a 402-amino-acid chain: Tol-Pal system protein TolB (402 aa).

A signal peptide spans 1 to 17 (MKKIVAIFLVFLGSLWA).

This sequence belongs to the TolB family. As to quaternary structure, the Tol-Pal system is composed of five core proteins: the inner membrane proteins TolA, TolQ and TolR, the periplasmic protein TolB and the outer membrane protein Pal. They form a network linking the inner and outer membranes and the peptidoglycan layer.

It is found in the periplasm. Part of the Tol-Pal system, which plays a role in outer membrane invagination during cell division and is important for maintaining outer membrane integrity. The polypeptide is Tol-Pal system protein TolB (Campylobacter jejuni (strain RM1221)).